The sequence spans 612 residues: Dihydroxy-acid dehydratase (612 aa).

Residue aspartate 81 participates in Mg(2+) binding. Cysteine 122 serves as a coordination point for [2Fe-2S] cluster. Mg(2+)-binding residues include aspartate 123 and lysine 124. Residue lysine 124 is modified to N6-carboxylysine. Cysteine 195 is a binding site for [2Fe-2S] cluster. Position 491 (glutamate 491) interacts with Mg(2+). Serine 517 acts as the Proton acceptor in catalysis.

This sequence belongs to the IlvD/Edd family. Homodimer. [2Fe-2S] cluster is required as a cofactor. The cofactor is Mg(2+).

The catalysed reaction is (2R)-2,3-dihydroxy-3-methylbutanoate = 3-methyl-2-oxobutanoate + H2O. The enzyme catalyses (2R,3R)-2,3-dihydroxy-3-methylpentanoate = (S)-3-methyl-2-oxopentanoate + H2O. Its pathway is amino-acid biosynthesis; L-isoleucine biosynthesis; L-isoleucine from 2-oxobutanoate: step 3/4. It functions in the pathway amino-acid biosynthesis; L-valine biosynthesis; L-valine from pyruvate: step 3/4. Functions in the biosynthesis of branched-chain amino acids. Catalyzes the dehydration of (2R,3R)-2,3-dihydroxy-3-methylpentanoate (2,3-dihydroxy-3-methylvalerate) into 2-oxo-3-methylpentanoate (2-oxo-3-methylvalerate) and of (2R)-2,3-dihydroxy-3-methylbutanoate (2,3-dihydroxyisovalerate) into 2-oxo-3-methylbutanoate (2-oxoisovalerate), the penultimate precursor to L-isoleucine and L-valine, respectively. This chain is Dihydroxy-acid dehydratase, found in Rhizobium etli (strain CIAT 652).